Here is a 210-residue protein sequence, read N- to C-terminus: Uracil phosphoribosyltransferase (210 aa).

5-phospho-alpha-D-ribose 1-diphosphate-binding positions include Arg-80, Arg-105, and 132–140; that span reads DPMLATGGS. Uracil contacts are provided by residues Ile-195 and 200-202; that span reads GDA. Residue Asp-201 participates in 5-phospho-alpha-D-ribose 1-diphosphate binding.

The protein belongs to the UPRTase family. The cofactor is Mg(2+).

The catalysed reaction is UMP + diphosphate = 5-phospho-alpha-D-ribose 1-diphosphate + uracil. It functions in the pathway pyrimidine metabolism; UMP biosynthesis via salvage pathway; UMP from uracil: step 1/1. Its activity is regulated as follows. Allosterically activated by GTP. Its function is as follows. Catalyzes the conversion of uracil and 5-phospho-alpha-D-ribose 1-diphosphate (PRPP) to UMP and diphosphate. The polypeptide is Uracil phosphoribosyltransferase (Thermoanaerobacter pseudethanolicus (strain ATCC 33223 / 39E) (Clostridium thermohydrosulfuricum)).